Reading from the N-terminus, the 401-residue chain is Argininosuccinate synthase (401 aa).

Residue 8–16 (AYSGGLDTS) participates in ATP binding. The L-citrulline site is built by tyrosine 86 and serine 91. Glycine 116 lines the ATP pocket. Positions 118, 122, and 123 each coordinate L-aspartate. L-citrulline is bound at residue asparagine 122. L-citrulline is bound by residues arginine 126, serine 175, serine 184, glutamate 260, and tyrosine 272.

It belongs to the argininosuccinate synthase family. Type 1 subfamily. Homotetramer.

The protein resides in the cytoplasm. The catalysed reaction is L-citrulline + L-aspartate + ATP = 2-(N(omega)-L-arginino)succinate + AMP + diphosphate + H(+). Its pathway is amino-acid biosynthesis; L-arginine biosynthesis; L-arginine from L-ornithine and carbamoyl phosphate: step 2/3. This chain is Argininosuccinate synthase, found in Clostridium kluyveri (strain ATCC 8527 / DSM 555 / NBRC 12016 / NCIMB 10680 / K1).